A 147-amino-acid chain; its full sequence is Large ribosomal subunit protein uL15 (147 aa).

The tract at residues 21 to 49 (RVGRGEGSKGKTAGRGTKGTKARAPVRPG) is disordered.

Belongs to the universal ribosomal protein uL15 family. As to quaternary structure, part of the 50S ribosomal subunit.

In terms of biological role, binds to the 23S rRNA. The protein is Large ribosomal subunit protein uL15 of Tropheryma whipplei (strain TW08/27) (Whipple's bacillus).